Here is a 489-residue protein sequence, read N- to C-terminus: Lysine--tRNA ligase (489 aa).

Mg(2+)-binding residues include E399 and E406.

Belongs to the class-II aminoacyl-tRNA synthetase family. As to quaternary structure, homodimer. It depends on Mg(2+) as a cofactor.

Its subcellular location is the cytoplasm. It catalyses the reaction tRNA(Lys) + L-lysine + ATP = L-lysyl-tRNA(Lys) + AMP + diphosphate. The polypeptide is Lysine--tRNA ligase (lysS) (Mycoplasma pneumoniae (strain ATCC 29342 / M129 / Subtype 1) (Mycoplasmoides pneumoniae)).